The sequence spans 134 residues: U34-theraphotoxin-Cg1a (134 aa).

The N-terminal stretch at 1-19 is a signal peptide; that stretch reads MKLAVVFLLTTVVFTLAQS. Disulfide bonds link Cys24/Cys35, Cys29/Cys53, and Cys63/Cys84. The interval 97–134 is disordered; it reads EQSSTSTSSTQGPITSSTVTTQSEATTETETTTAAEGK. Residues 99–134 are compositionally biased toward low complexity; it reads SSTSTSSTQGPITSSTVTTQSEATTETETTTAAEGK.

It belongs to the neurotoxin 32 family. Expressed by the venom gland.

It is found in the secreted. The polypeptide is U34-theraphotoxin-Cg1a (Chilobrachys guangxiensis (Chinese earth tiger tarantula)).